Consider the following 299-residue polypeptide: Phosphoribosylaminoimidazole-succinocarboxamide synthase (299 aa).

This sequence belongs to the SAICAR synthetase family.

The catalysed reaction is 5-amino-1-(5-phospho-D-ribosyl)imidazole-4-carboxylate + L-aspartate + ATP = (2S)-2-[5-amino-1-(5-phospho-beta-D-ribosyl)imidazole-4-carboxamido]succinate + ADP + phosphate + 2 H(+). It participates in purine metabolism; IMP biosynthesis via de novo pathway; 5-amino-1-(5-phospho-D-ribosyl)imidazole-4-carboxamide from 5-amino-1-(5-phospho-D-ribosyl)imidazole-4-carboxylate: step 1/2. This is Phosphoribosylaminoimidazole-succinocarboxamide synthase from Desulfatibacillum aliphaticivorans.